A 386-amino-acid polypeptide reads, in one-letter code: Mannitol-1-phosphate 5-dehydrogenase (386 aa).

4 to 15 serves as a coordination point for NAD(+); it reads ALHFGAGNIGRG.

Belongs to the mannitol dehydrogenase family.

The catalysed reaction is D-mannitol 1-phosphate + NAD(+) = beta-D-fructose 6-phosphate + NADH + H(+). The polypeptide is Mannitol-1-phosphate 5-dehydrogenase (Caldanaerobacter subterraneus subsp. tengcongensis (strain DSM 15242 / JCM 11007 / NBRC 100824 / MB4) (Thermoanaerobacter tengcongensis)).